A 417-amino-acid polypeptide reads, in one-letter code: NADH-quinone oxidoreductase subunit D (417 aa).

It belongs to the complex I 49 kDa subunit family. In terms of assembly, NDH-1 is composed of 14 different subunits. Subunits NuoB, C, D, E, F, and G constitute the peripheral sector of the complex.

It localises to the cell inner membrane. It catalyses the reaction a quinone + NADH + 5 H(+)(in) = a quinol + NAD(+) + 4 H(+)(out). NDH-1 shuttles electrons from NADH, via FMN and iron-sulfur (Fe-S) centers, to quinones in the respiratory chain. The immediate electron acceptor for the enzyme in this species is believed to be ubiquinone. Couples the redox reaction to proton translocation (for every two electrons transferred, four hydrogen ions are translocated across the cytoplasmic membrane), and thus conserves the redox energy in a proton gradient. In Burkholderia multivorans (strain ATCC 17616 / 249), this protein is NADH-quinone oxidoreductase subunit D.